Reading from the N-terminus, the 339-residue chain is DNA-directed RNA polymerase subunit alpha (339 aa).

The tract at residues 1–235 is alpha N-terminal domain (alpha-NTD); it reads MTIQKNWQEL…DQLNVFVNFE (235 aa). Positions 251–339 are alpha C-terminal domain (alpha-CTD); it reads FNPAFLKKVD…ELAKRFEDHY (89 aa).

It belongs to the RNA polymerase alpha chain family. In terms of assembly, homodimer. The RNAP catalytic core consists of 2 alpha, 1 beta, 1 beta' and 1 omega subunit. When a sigma factor is associated with the core the holoenzyme is formed, which can initiate transcription.

It carries out the reaction RNA(n) + a ribonucleoside 5'-triphosphate = RNA(n+1) + diphosphate. DNA-dependent RNA polymerase catalyzes the transcription of DNA into RNA using the four ribonucleoside triphosphates as substrates. The sequence is that of DNA-directed RNA polymerase subunit alpha from Nitrobacter winogradskyi (strain ATCC 25391 / DSM 10237 / CIP 104748 / NCIMB 11846 / Nb-255).